Here is a 217-residue protein sequence, read N- to C-terminus: Probable transaldolase (217 aa).

Lys83 serves as the catalytic Schiff-base intermediate with substrate.

The protein belongs to the transaldolase family. Type 3B subfamily.

The protein localises to the cytoplasm. The catalysed reaction is D-sedoheptulose 7-phosphate + D-glyceraldehyde 3-phosphate = D-erythrose 4-phosphate + beta-D-fructose 6-phosphate. Its pathway is carbohydrate degradation; pentose phosphate pathway; D-glyceraldehyde 3-phosphate and beta-D-fructose 6-phosphate from D-ribose 5-phosphate and D-xylulose 5-phosphate (non-oxidative stage): step 2/3. Functionally, transaldolase is important for the balance of metabolites in the pentose-phosphate pathway. This Anaeromyxobacter dehalogenans (strain 2CP-C) protein is Probable transaldolase.